A 281-amino-acid polypeptide reads, in one-letter code: Tetraspanin-33 (281 aa).

Residues 1 to 23 lie on the Cytoplasmic side of the membrane; sequence MGNAKRATQNDEDYTFVSPVVKY. The helical transmembrane segment at 24–44 threads the bilayer; that stretch reads LLFFFNMIFWIISLVLISIGV. The Extracellular portion of the chain corresponds to 45 to 62; sequence YSRIVKHETALACLTVDP. The helical transmembrane segment at 63-83 threads the bilayer; sequence ALILMVVGILMFFITFCGCVG. Over 84–94 the chain is Cytoplasmic; that stretch reads SLRENICLLQT. The chain crosses the membrane as a helical span at residues 95 to 115; sequence FCIFLTIMFLLQLLAGVLGFV. The Extracellular segment spans residues 116 to 233; the sequence is FSDKARGKVT…DILVNWIHSN (118 aa). Cystine bridges form between cysteine 154/cysteine 222, cysteine 155/cysteine 187, cysteine 171/cysteine 181, and cysteine 188/cysteine 201. A glycan (N-linked (GlcNAc...) asparagine) is linked at asparagine 170. Residues 234-254 form a helical membrane-spanning segment; that stretch reads LFLLGGIALGLTIPQLVGILL. Topologically, residues 255 to 281 are cytoplasmic; the sequence is SQVLINQIQDQIKLQNYNQQHRSDPWS.

Belongs to the tetraspanin (TM4SF) family. As to quaternary structure, homodimer; disulfide-linked.

Its subcellular location is the cell membrane. It localises to the cell junction. It is found in the adherens junction. The protein localises to the cytoplasm. In terms of biological role, part of TspanC8 subgroup, composed of 6 members that interact with the transmembrane metalloprotease ADAM10. This interaction is required for ADAM10 exit from the endoplasmic reticulum and for enzymatic maturation and trafficking to the cell surface as well as substrate specificity. Different TspanC8/ADAM10 complexes have distinct substrates. The chain is Tetraspanin-33 (tspan33) from Danio rerio (Zebrafish).